The primary structure comprises 357 residues: Arginine kinase Scy p 2.0101 (357 aa).

Positions 9 to 91 (KLEEGFKKLE…FDPIIEDYHK (83 aa)) constitute a Phosphagen kinase N-terminal domain. 64–68 (GVGVY) serves as a coordination point for L-arginine. IgE-binding and beta-hexosaminidase release from rat basophilic leukemia (RBL) cells stretches follow at residues 113–127 (VDPDGKFVISTRVRC) and 127–155 (CGRSMEGYPFNPCLTEAQYKEMESKVSST). The Phosphagen kinase C-terminal domain maps to 119–356 (FVISTRVRCG…LELIKIEKEM (238 aa)). 122–126 (STRVR) is an ATP binding site. Histidine 185 serves as a coordination point for ATP. Cysteine 201 and cysteine 271 are oxidised to a cystine. The interval 204 to 218 (WPTGRGIYHNDNKTF) is igE-binding and beta-hexosaminidase release from rat basophilic leukemia (RBL) cells. The segment at 211–225 (YHNDNKTFLVWCNEE) is igE-binding, but no beta-hexosaminidase release from rat basophilic leukemia (RBL) cells. Glutamate 225 serves as a coordination point for L-arginine. Arginine 229 contributes to the ATP binding site. Cysteine 271 lines the L-arginine pocket. Residues 280 to 284 (RASVH) and 309 to 314 (RGTRGE) each bind ATP. An L-arginine-binding site is contributed by glutamate 314. Residues 316 to 330 (TEAEGGVYDISNKRR) form an igE-binding, but no beta-hexosaminidase release from rat basophilic leukemia (RBL) cells region.

Belongs to the ATP:guanido phosphotransferase family. Post-translationally, glycosylated. Muscle (at protein level).

The enzyme catalyses L-arginine + ATP = N(omega)-phospho-L-arginine + ADP + H(+). Catalyzes the reversible transfer of high energy ATP gamma-phosphate group to L-arginine. This chain is Arginine kinase Scy p 2.0101, found in Scylla paramamosain (Mud crab).